The chain runs to 146 residues: Vascular endothelial growth factor isoform GtVF (146 aa).

The N-terminal stretch at 1–24 is a signal peptide; it reads MAAYLLAVAILFCIQGWPSGTVQG. Gln25 carries the post-translational modification Pyrrolidone carboxylic acid. 3 disulfides stabilise this stretch: Cys38-Cys80, Cys69-Cys115, and Cys73-Cys117. The interval 116–146 is disordered; the sequence is ECRPRSRSGVDSGKRKRNPEEGEPRAKFPFV. The segment covering 133-146 has biased composition (basic and acidic residues); it reads NPEEGEPRAKFPFV.

Belongs to the PDGF/VEGF growth factor family. Snake venom VEGF subfamily. In terms of assembly, homodimer; disulfide-linked. In terms of tissue distribution, expressed by the venom gland.

It is found in the secreted. Snake venom VEGFs that may contribute to venom dispersion and prey subjugation by inducing vascular permeability and hypotension. This protein induces an increase in capillary permeability after intradermal injection, in a VEGFR-2 (KDR) dependent manner. In addition, it provokes a drastic hypotensive effect after intravenous injection. The hypotension is mediated by nitric oxide (NO), which is produced by VEGF-activated endothelium NO synthase. Also induces angiogenesis in vitro. Unlike other crotalid VEGFs, this protein probably interacts with VEGF receptor-2 (KDR). In Gloydius tsushimaensis (Tsushima Island pitviper), this protein is Vascular endothelial growth factor isoform GtVF.